Reading from the N-terminus, the 102-residue chain is Guanyl-specific ribonuclease Pc (102 aa).

Intrachain disulfides connect Cys2–Cys10 and Cys6–Cys101. The active site involves His38. Glu56 (proton acceptor) is an active-site residue. The Proton donor role is filled by His90.

Belongs to the ribonuclease N1/T1 family.

It catalyses the reaction [RNA] containing guanosine + H2O = an [RNA fragment]-3'-guanosine-3'-phosphate + a 5'-hydroxy-ribonucleotide-3'-[RNA fragment].. The chain is Guanyl-specific ribonuclease Pc from Penicillium chrysogenum (Penicillium notatum).